Here is a 422-residue protein sequence, read N- to C-terminus: MLDTKFVRANPEAVQEALQKRGANISLDDFLELDRRRRALVVEVESLKAKRNAVSAEIARRKKAKEDAEALIAEMRQVGDQIKALDDELTRIELDMDNRMLYIPNIPHASVPVGTSEEDNVEVRRWGTPRTFDFPVKAHWDIGEDLNILDFQRGAKISGARFTVYKGLGARLERAVINLMMDTHAQRGYTEVLPPYLVNRQSMLGTGQLPKFAEDMFAVAGTDYYLIPTAEVPVTNLYTNEILDADKLPIHHCAYSACFRAEAGAAGRDTRGLIRQHQFNKVELVKFTRPENSYDELEKLTKDAEHILQLLGLPYRVITLCTGDMGFSAAKTYDIEVWLPSFGAYREISSCSNFEDFQARRANIRFRPSPKAKPEFVHTLNGSGLAVGRTVAAILENCQQPDGSVVIPEALRPYMGVDVIGG.

Residue 229-231 participates in L-serine binding; the sequence is TAE. 260 to 262 contributes to the ATP binding site; that stretch reads RAE. Glu283 is a binding site for L-serine. 347–350 contributes to the ATP binding site; the sequence is EISS. Ser383 is a binding site for L-serine.

This sequence belongs to the class-II aminoacyl-tRNA synthetase family. Type-1 seryl-tRNA synthetase subfamily. Homodimer. The tRNA molecule binds across the dimer.

It is found in the cytoplasm. It catalyses the reaction tRNA(Ser) + L-serine + ATP = L-seryl-tRNA(Ser) + AMP + diphosphate + H(+). It carries out the reaction tRNA(Sec) + L-serine + ATP = L-seryl-tRNA(Sec) + AMP + diphosphate + H(+). It functions in the pathway aminoacyl-tRNA biosynthesis; selenocysteinyl-tRNA(Sec) biosynthesis; L-seryl-tRNA(Sec) from L-serine and tRNA(Sec): step 1/1. In terms of biological role, catalyzes the attachment of serine to tRNA(Ser). Is also able to aminoacylate tRNA(Sec) with serine, to form the misacylated tRNA L-seryl-tRNA(Sec), which will be further converted into selenocysteinyl-tRNA(Sec). In Heliobacterium modesticaldum (strain ATCC 51547 / Ice1), this protein is Serine--tRNA ligase.